The sequence spans 647 residues: Macrolide export ATP-binding/permease protein MacB (647 aa).

Residues 5-243 (LELKGIERSY…TQTPSLTSKI (239 aa)) form the ABC transporter domain. Residue 41–48 (GASGSGKS) coordinates ATP. Helical transmembrane passes span 272–292 (LLTM…LVIG), 522–542 (LFLT…VMNI), 576–596 (ILVC…IAFI), and 610–630 (PIAL…FGFL).

The protein belongs to the ABC transporter superfamily. Macrolide exporter (TC 3.A.1.122) family. In terms of assembly, homodimer. Part of the tripartite efflux system MacAB-TolC, which is composed of an inner membrane transporter, MacB, a periplasmic membrane fusion protein, MacA, and an outer membrane component, TolC. The complex forms a large protein conduit and can translocate molecules across both the inner and outer membranes. Interacts with MacA.

Its subcellular location is the cell inner membrane. Part of the tripartite efflux system MacAB-TolC. MacB is a non-canonical ABC transporter that contains transmembrane domains (TMD), which form a pore in the inner membrane, and an ATP-binding domain (NBD), which is responsible for energy generation. Confers resistance against macrolides. This chain is Macrolide export ATP-binding/permease protein MacB, found in Photorhabdus laumondii subsp. laumondii (strain DSM 15139 / CIP 105565 / TT01) (Photorhabdus luminescens subsp. laumondii).